A 308-amino-acid chain; its full sequence is ATP synthase gamma chain (308 aa).

This sequence belongs to the ATPase gamma chain family. As to quaternary structure, F-type ATPases have 2 components, CF(1) - the catalytic core - and CF(0) - the membrane proton channel. CF(1) has five subunits: alpha(3), beta(3), gamma(1), delta(1), epsilon(1). CF(0) has three main subunits: a, b and c.

The protein localises to the cell inner membrane. Its function is as follows. Produces ATP from ADP in the presence of a proton gradient across the membrane. The gamma chain is believed to be important in regulating ATPase activity and the flow of protons through the CF(0) complex. The sequence is that of ATP synthase gamma chain from Bartonella tribocorum (strain CIP 105476 / IBS 506).